The primary structure comprises 60 residues: Large ribosomal subunit protein uL30 (60 aa).

The protein belongs to the universal ribosomal protein uL30 family. Part of the 50S ribosomal subunit.

This is Large ribosomal subunit protein uL30 from Flavobacterium johnsoniae (strain ATCC 17061 / DSM 2064 / JCM 8514 / BCRC 14874 / CCUG 350202 / NBRC 14942 / NCIMB 11054 / UW101) (Cytophaga johnsonae).